The primary structure comprises 154 residues: UPF0756 membrane protein EAT1b_0668 (154 aa).

The next 5 membrane-spanning stretches (helical) occupy residues 5–25 (LFLLMLVLIGVISNNQSVIIA), 52–72 (WGVTIITIAVLVPIATGDIGF), 82–102 (PVGIVAFASGMFVAIAAGQGV), 107–127 (VDPVVTTALLAGTILAVGFMK), and 129–149 (IPVGPLVGAGIAALILGGYQV).

Belongs to the UPF0756 family.

It is found in the cell membrane. The sequence is that of UPF0756 membrane protein EAT1b_0668 from Exiguobacterium sp. (strain ATCC BAA-1283 / AT1b).